A 469-amino-acid polypeptide reads, in one-letter code: Zinc finger CCCH domain-containing protein 30 (469 aa).

Residues 415–443 form a C3H1-type zinc finger; it reads VRPMKPCAYFNSPKGCRNGASCTFLHDAS. The interval 444–469 is disordered; it reads APTRKDHQKQKGSKRIKLDNTMGGRN. Positions 449–458 are enriched in basic residues; it reads DHQKQKGSKR.

This chain is Zinc finger CCCH domain-containing protein 30, found in Oryza sativa subsp. japonica (Rice).